The primary structure comprises 172 residues: uncharacterized protein (172 aa).

Residues 3-171 (KKVAIILSNE…FNREIVKQLQ (169 aa)) form the PfpI endopeptidase domain.

This sequence belongs to the peptidase C56 family.

This is an uncharacterized protein from Staphylococcus haemolyticus (strain JCSC1435).